Reading from the N-terminus, the 304-residue chain is Nucleotide-binding protein ROP_69550 (304 aa).

24-31 is an ATP binding site; that stretch reads GLSGAGLQ. Position 75-78 (75-78) interacts with GTP; that stretch reads DVRS.

The protein belongs to the RapZ-like family.

Its function is as follows. Displays ATPase and GTPase activities. This Rhodococcus opacus (strain B4) protein is Nucleotide-binding protein ROP_69550.